The primary structure comprises 441 residues: Velvet complex subunit B (441 aa).

The 173-residue stretch at 1 to 173 (MSTLGQGDFE…SDQGVRLRLR (173 aa)) folds into the Velvet domain. Disordered stretches follow at residues 200-220 (GYLP…PHHL), 234-295 (RSRS…ETDT), and 341-396 (MPSP…PSYA). Low complexity-rich tracts occupy residues 272-283 (DGASPDSPHPSS) and 361-375 (PAGA…FSPG).

This sequence belongs to the velvet family. VelB subfamily. As to quaternary structure, component of the heterotrimeric velvet complex composed of laeA, veA and velB; VeA acting as a bridging protein between laeA and velB.

Its subcellular location is the nucleus. The protein resides in the cytoplasm. Functionally, component of the velvet transcription factor complex that controls sexual/asexual developmental ratio in response to light, promoting sexual development in the darkness while stimulating asexual sporulation under illumination. The velvet complex acts as a global regulator for secondary metabolite gene expression and is required for the production of chaetoglobosin A. The protein is Velvet complex subunit B of Chaetomium globosum (strain ATCC 6205 / CBS 148.51 / DSM 1962 / NBRC 6347 / NRRL 1970) (Soil fungus).